Here is a 668-residue protein sequence, read N- to C-terminus: Myb-like protein W (668 aa).

6 disordered regions span residues 57–124 (LDQF…NESV), 246–357 (EKEK…EEEV), 403–432 (KPKS…TDKG), 497–546 (YTNT…NKER), 561–583 (SMGR…TTTS), and 631–668 (QCEE…DEII). Over residues 69 to 121 (NNNNNNNSNNNNNNNNNNNNNNNNNNNNNNNNNNNNNNNNNNYNNYNNNNNNN) the composition is skewed to low complexity. The span at 246-268 (EKEKRKKEREEREEREKQEKQEQ) shows a compositional bias: basic and acidic residues. The segment covering 293–307 (NNKDNNHNGYYYYYD) has biased composition (low complexity). A compositionally biased stretch (acidic residues) spans 308-318 (NDNDNYNDGDD). A compositionally biased stretch (basic and acidic residues) spans 319-335 (EKEKEKEKEKEKEKENE). One can recognise a Myb-like domain in the interval 344–398 (TSMVNSEEWTEEEVNKMNEIRGKLSTADYNYWDKVSAHVKSKTAEQCQRKYNSRF). Positions 501–542 (NNNNNNNNNNNNNNNNNNNNNNNNNNNNNNNNNNNNNNNNNN) are enriched in low complexity. Basic and acidic residues predominate over residues 632-641 (CEERKKKEDR). Residues 642 to 651 (DVDEDGEDDY) show a composition bias toward acidic residues.

This chain is Myb-like protein W (mybW), found in Dictyostelium discoideum (Social amoeba).